Reading from the N-terminus, the 356-residue chain is sn-glycerol-3-phosphate import ATP-binding protein UgpC (356 aa).

In terms of domain architecture, ABC transporter spans 4-235 (LKLQAVTKSW…PASLFVASFI (232 aa)). 37-44 (GPSGCGKS) provides a ligand contact to ATP.

Belongs to the ABC transporter superfamily. sn-glycerol-3-phosphate importer (TC 3.A.1.1.3) family. In terms of assembly, the complex is composed of two ATP-binding proteins (UgpC), two transmembrane proteins (UgpA and UgpE) and a solute-binding protein (UgpB).

It localises to the cell inner membrane. The enzyme catalyses sn-glycerol 3-phosphate(out) + ATP + H2O = sn-glycerol 3-phosphate(in) + ADP + phosphate + H(+). Functionally, part of the ABC transporter complex UgpBAEC involved in sn-glycerol-3-phosphate (G3P) import. Responsible for energy coupling to the transport system. The sequence is that of sn-glycerol-3-phosphate import ATP-binding protein UgpC from Escherichia coli O157:H7.